The following is a 299-amino-acid chain: Oxygen-dependent coproporphyrinogen-III oxidase (299 aa).

Ser92 contributes to the substrate binding site. 2 residues coordinate Mn(2+): His96 and His106. His106 functions as the Proton donor in the catalytic mechanism. 108–110 (NVR) provides a ligand contact to substrate. 2 residues coordinate Mn(2+): His145 and His175. The segment at 240–275 (YVEFNLVWDRGTLFGLQTGGRTESILMSMPPLVRWE) is important for dimerization. 258–260 (GGR) lines the substrate pocket.

It belongs to the aerobic coproporphyrinogen-III oxidase family. Homodimer. The cofactor is Mn(2+).

Its subcellular location is the cytoplasm. It carries out the reaction coproporphyrinogen III + O2 + 2 H(+) = protoporphyrinogen IX + 2 CO2 + 2 H2O. Its pathway is porphyrin-containing compound metabolism; protoporphyrin-IX biosynthesis; protoporphyrinogen-IX from coproporphyrinogen-III (O2 route): step 1/1. Involved in the heme biosynthesis. Catalyzes the aerobic oxidative decarboxylation of propionate groups of rings A and B of coproporphyrinogen-III to yield the vinyl groups in protoporphyrinogen-IX. This chain is Oxygen-dependent coproporphyrinogen-III oxidase, found in Escherichia coli O17:K52:H18 (strain UMN026 / ExPEC).